The following is a 115-amino-acid chain: MNIIKKIEGEHLRFDLPKFKSGDTVKVHLRIVEGEKERIQVFQGNVIRIHRGTTGGTFTVRKVSDGVGVERVFPLHSPFIDRVEMVTEGRVRRSRLYYLRELKGKAARIKPKNRF.

Belongs to the bacterial ribosomal protein bL19 family.

Functionally, this protein is located at the 30S-50S ribosomal subunit interface and may play a role in the structure and function of the aminoacyl-tRNA binding site. The sequence is that of Large ribosomal subunit protein bL19 from Nitratidesulfovibrio vulgaris (strain DSM 19637 / Miyazaki F) (Desulfovibrio vulgaris).